We begin with the raw amino-acid sequence, 382 residues long: Anhydro-N-acetylmuramic acid kinase (382 aa).

9–16 is a binding site for ATP; the sequence is GTSLDGID.

It belongs to the anhydro-N-acetylmuramic acid kinase family.

The enzyme catalyses 1,6-anhydro-N-acetyl-beta-muramate + ATP + H2O = N-acetyl-D-muramate 6-phosphate + ADP + H(+). The protein operates within amino-sugar metabolism; 1,6-anhydro-N-acetylmuramate degradation. Its pathway is cell wall biogenesis; peptidoglycan recycling. Functionally, catalyzes the specific phosphorylation of 1,6-anhydro-N-acetylmuramic acid (anhMurNAc) with the simultaneous cleavage of the 1,6-anhydro ring, generating MurNAc-6-P. Is required for the utilization of anhMurNAc either imported from the medium or derived from its own cell wall murein, and thus plays a role in cell wall recycling. In Bacillus thuringiensis subsp. konkukian (strain 97-27), this protein is Anhydro-N-acetylmuramic acid kinase.